The chain runs to 687 residues: Fimbrin-5 (687 aa).

An EF-hand domain is found at 7-74 (VLVSDPWLQS…KSVLDKSYPN (68 aa)). 4 consecutive Calponin-homology (CH) domains span residues 122-239 (ESEK…KIQM), 267-370 (LAPE…QHRN), 392-498 (SREE…RYTM), and 513-621 (EITD…YWSL). 2 actin-binding regions span residues 122–370 (ESEK…QHRN) and 392–621 (SREE…YWSL). Residues 628 to 687 (ESTVSEDATDDGDANSVAGEISNLSIDGASESSPTVQDQELLTKADNDEDEVDGENNKDA) form a disordered region. Residues 649 to 667 (SNLSIDGASESSPTVQDQE) show a composition bias toward polar residues.

In terms of assembly, interacts with F-actin. Expressed in mature pollen.

It localises to the cytoplasm. The protein resides in the cytoskeleton. Its function is as follows. Cross-links actin filaments (F-actin) in a calcium independent manner. Induces the formation of actin bundles. Stabilizes and prevents F-actin depolymerization mediated by latrunculin B (LatB). This Arabidopsis thaliana (Mouse-ear cress) protein is Fimbrin-5.